The following is a 374-amino-acid chain: Cyclin-dependent kinase 9 (374 aa).

A Protein kinase domain is found at Tyr19–Phe318. Residues Ile25–Val33 and Lys48 each bind ATP. The active-site Proton acceptor is the Asp151. The tract at residues Pro345 to Phe374 is disordered. Polar residues predominate over residues Gln354 to Ser368.

The protein belongs to the protein kinase superfamily. CMGC Ser/Thr protein kinase family. CDC2/CDKX subfamily. In terms of assembly, component of the super elongation complex (SEC). Associates with ccnt1/cyclin-T1, ccnt2/cyclin-T2 or ccnk/cyclin-K to form active P-TEFb.

Its subcellular location is the nucleus. It localises to the cytoplasm. It is found in the PML body. It catalyses the reaction L-seryl-[protein] + ATP = O-phospho-L-seryl-[protein] + ADP + H(+). The enzyme catalyses L-threonyl-[protein] + ATP = O-phospho-L-threonyl-[protein] + ADP + H(+). The catalysed reaction is [DNA-directed RNA polymerase] + ATP = phospho-[DNA-directed RNA polymerase] + ADP + H(+). Protein kinase involved in the regulation of transcription. Member of the cyclin-dependent kinase pair (CDK9/cyclin-T) complex, also called positive transcription elongation factor b (P-TEFb), which facilitates the transition from abortive to productive elongation by phosphorylating the CTD (C-terminal domain) of the large subunit of RNA polymerase II (RNAP II) polr2a, supt5h and rdbp. This complex is inactive when in the 7SK snRNP complex form. Regulates cytokine inducible transcription networks by facilitating promoter recognition of target transcription factors. P-TEFb is also involved in cotranscriptional histone modification, mRNA processing and mRNA export. The sequence is that of Cyclin-dependent kinase 9 from Danio rerio (Zebrafish).